A 232-amino-acid chain; its full sequence is 7-cyano-7-deazaguanine synthase (232 aa).

ATP is bound at residue 8-18; that stretch reads FSGGQDSTTCL. Residues cysteine 187, cysteine 196, cysteine 199, and cysteine 202 each coordinate Zn(2+).

Belongs to the QueC family. Zn(2+) serves as cofactor.

The enzyme catalyses 7-carboxy-7-deazaguanine + NH4(+) + ATP = 7-cyano-7-deazaguanine + ADP + phosphate + H2O + H(+). Its pathway is purine metabolism; 7-cyano-7-deazaguanine biosynthesis. Catalyzes the ATP-dependent conversion of 7-carboxy-7-deazaguanine (CDG) to 7-cyano-7-deazaguanine (preQ(0)). The polypeptide is 7-cyano-7-deazaguanine synthase (Photobacterium profundum (strain SS9)).